A 397-amino-acid chain; its full sequence is MEVLYSLSKTLKDARDKIIEGTLYSNVSDLIQQFNQMIVTMNGNDFQTGGIGNLPIRNWTFDFGLLGTTLLNLDANYVETARTTIEYFIDFIDNVCMDEMARESQRNGVAPQSEALRKLAGIKFKRINFNNSSEYIENWNLQNRRQRTGFVFHKPNIFPYSASFTLNRSQPMHDNLMGTMWLNAGSEIQVAGFDYSCALNAPANIQQFEHIVQLRRALTTATITLLPDAERFSFPRVINSADGATTWFFNPIILRPNNVEVEFLLNGQIINTYQARFGTIIARNFDTIRLSFQLMRPPNMTPAVNALFPQAQPFQYHATVGLTLRIESAVCESVLADANETLLANVTAVRQEYAIPVGPVFPPGMNWTELITNYSPSREDNLQRVFTVASIRSMLIK.

The tract at residues 62-73 (DFGLLGTTLLNL) is interaction with the inner capsid protein VP2. His153 lines the Zn(2+) pocket. Asn266 and Asp286 together coordinate Ca(2+).

Belongs to the rotavirus VP6 family. In terms of assembly, homotrimer. Interacts with the inner capsid protein VP2. Interacts with the outer capsid glycoprotein VP7. Interacts with the outer capsid protein VP5*. In terms of processing, the N-terminus is blocked. Sumoylated with SUMO1 and SUMO2. Sumoylation of viral proteins seems to have a positive role on viral replication.

Its subcellular location is the virion. Intermediate capsid protein that self assembles to form an icosahedral capsid with a T=13 symmetry, which consists of 230 trimers of VP6, with channels at each of its five-fold vertices. This capsid constitutes the middle concentric layer of the viral mature particle. The innermost VP2 capsid and the intermediate VP6 capsid remain intact following cell entry to protect the dsRNA from degradation and to prevent unfavorable antiviral responses in the host cell during all the replication cycle of the virus. Nascent transcripts are transcribed within the structural confines of this double-layered particle (DLP) and are extruded through the channels at the five-fold axes. VP6 is required for the transcription activity of the DLP. The sequence is that of Intermediate capsid protein VP6 from Rotavirus A (isolate RVA/Human/United States/WI61/1983/G9P1A[8]) (RV-A).